The sequence spans 111 residues: Cell cycle protein GpsB (111 aa).

A coiled-coil region spans residues Ile38–Val72.

The protein belongs to the GpsB family. In terms of assembly, forms polymers through the coiled coil domains. Interacts with PBP1, MreC and EzrA.

The protein localises to the cytoplasm. In terms of biological role, divisome component that associates with the complex late in its assembly, after the Z-ring is formed, and is dependent on DivIC and PBP2B for its recruitment to the divisome. Together with EzrA, is a key component of the system that regulates PBP1 localization during cell cycle progression. Its main role could be the removal of PBP1 from the cell pole after pole maturation is completed. Also contributes to the recruitment of PBP1 to the division complex. Not essential for septum formation. The protein is Cell cycle protein GpsB of Bacillus cereus (strain G9842).